Here is a 150-residue protein sequence, read N- to C-terminus: Large ribosomal subunit protein uL15 (150 aa).

Belongs to the universal ribosomal protein uL15 family. Part of the 50S ribosomal subunit.

Binds to the 23S rRNA. This Anaplasma marginale (strain Florida) protein is Large ribosomal subunit protein uL15.